The primary structure comprises 328 residues: Tetraacyldisaccharide 4'-kinase (328 aa).

55–62 contacts ATP; it reads TAGGNGKT.

Belongs to the LpxK family.

It carries out the reaction a lipid A disaccharide + ATP = a lipid IVA + ADP + H(+). It functions in the pathway glycolipid biosynthesis; lipid IV(A) biosynthesis; lipid IV(A) from (3R)-3-hydroxytetradecanoyl-[acyl-carrier-protein] and UDP-N-acetyl-alpha-D-glucosamine: step 6/6. In terms of biological role, transfers the gamma-phosphate of ATP to the 4'-position of a tetraacyldisaccharide 1-phosphate intermediate (termed DS-1-P) to form tetraacyldisaccharide 1,4'-bis-phosphate (lipid IVA). The polypeptide is Tetraacyldisaccharide 4'-kinase (Escherichia coli O81 (strain ED1a)).